A 223-amino-acid polypeptide reads, in one-letter code: ATP synthase subunit a 1 (223 aa).

The next 5 membrane-spanning stretches (helical) occupy residues 20–40 (QTIVMTWVIMVFLAGGSAFLT), 78–98 (YLSYLATLFLFVATAVLFTII), 107–127 (SLSTTAALALSVFVAVPLYGI), 173–193 (VMIIGILLGIAPLFFPVLMSV), and 194–214 (LGLLTGMVQAYIFSMLATVYI).

It belongs to the ATPase A chain family. As to quaternary structure, F-type ATPases have 2 components, CF(1) - the catalytic core - and CF(0) - the membrane proton channel. CF(1) has five subunits: alpha(3), beta(3), gamma(1), delta(1), epsilon(1). CF(0) has four main subunits: a, b, b' and c.

It localises to the cell inner membrane. In terms of biological role, key component of the proton channel; it plays a direct role in the translocation of protons across the membrane. This chain is ATP synthase subunit a 1, found in Prosthecochloris aestuarii (strain DSM 271 / SK 413).